The following is a 101-amino-acid chain: UPF0751 protein DSY3086 (101 aa).

Belongs to the UPF0751 family.

This Desulfitobacterium hafniense (strain Y51) protein is UPF0751 protein DSY3086.